The following is a 525-amino-acid chain: Membrane-bound lytic murein transglycosylase F (525 aa).

The signal sequence occupies residues 1–24 (MQIRHFNRLKRSVLLFASVLLLSA). The segment at 25–284 (CQIESQPKSE…SLEEKYIGHI (260 aa)) is non-LT domain. The LT domain stretch occupies residues 286 to 525 (AFDYVDTRAF…VDEDLDQEEE (240 aa)). E329 is an active-site residue. The tract at residues 506 to 525 (VSGASDITNEVDEDLDQEEE) is disordered. Acidic residues predominate over residues 514–525 (NEVDEDLDQEEE).

It in the N-terminal section; belongs to the bacterial solute-binding protein 3 family. In the C-terminal section; belongs to the transglycosylase Slt family.

The protein localises to the cell outer membrane. It catalyses the reaction Exolytic cleavage of the (1-&gt;4)-beta-glycosidic linkage between N-acetylmuramic acid (MurNAc) and N-acetylglucosamine (GlcNAc) residues in peptidoglycan, from either the reducing or the non-reducing ends of the peptidoglycan chains, with concomitant formation of a 1,6-anhydrobond in the MurNAc residue.. Functionally, murein-degrading enzyme that degrades murein glycan strands and insoluble, high-molecular weight murein sacculi, with the concomitant formation of a 1,6-anhydromuramoyl product. Lytic transglycosylases (LTs) play an integral role in the metabolism of the peptidoglycan (PG) sacculus. Their lytic action creates space within the PG sacculus to allow for its expansion as well as for the insertion of various structures such as secretion systems and flagella. The chain is Membrane-bound lytic murein transglycosylase F from Vibrio parahaemolyticus serotype O3:K6 (strain RIMD 2210633).